The primary structure comprises 592 residues: V-type ATP synthase alpha chain (592 aa).

Position 232 to 239 (232 to 239 (GPFGAGKT)) interacts with ATP.

This sequence belongs to the ATPase alpha/beta chains family.

It carries out the reaction ATP + H2O + 4 H(+)(in) = ADP + phosphate + 5 H(+)(out). Its function is as follows. Produces ATP from ADP in the presence of a proton gradient across the membrane. The V-type alpha chain is a catalytic subunit. This chain is V-type ATP synthase alpha chain, found in Clostridium botulinum (strain Alaska E43 / Type E3).